The following is a 1021-amino-acid chain: Ephrin type-B receptor 6 (1021 aa).

The signal sequence occupies residues 1 to 31; that stretch reads MATEGAAQLGNRVAGMVCSLWVLLLVSSVLA. The Extracellular portion of the chain corresponds to 32-594; it reads LEEVLLDTTG…LSSQLPERLS (563 aa). The Eph LBD domain occupies 33-237; that stretch reads EEVLLDTTGE…FSYTCPAVLR (205 aa). A disordered region spans residues 163–182; that stretch reads SFPSSSSSSSSSSSAAWAVG. Residues 166-176 show a composition bias toward low complexity; the sequence is SSSSSSSSSSS. 2 consecutive Fibronectin type-III domains span residues 369 to 486 and 487 to 582; these read PPSA…TSHE and VPSA…TLPQ. An N-linked (GlcNAc...) asparagine glycan is attached at asparagine 480. Residues 595–615 form a helical membrane-spanning segment; sequence LVIGSILGALAFLLLAAITVL. At 616 to 1021 the chain is on the cytoplasmic side; the sequence is AVVFQRKRRG…HLRQQGSVEV (406 aa). A Protein kinase domain is found at 670–919; the sequence is IKIEEVIGTG…QLVAAFDKMI (250 aa). Residue 676-684 participates in ATP binding; the sequence is IGTGSFGEV. Positions 948–1012 constitute an SAM domain; that stretch reads PCLDSPQAWL…LHHIQLLQQH (65 aa). Positions 1019–1021 match the PDZ-binding motif; it reads VEV.

The protein belongs to the protein kinase superfamily. Tyr protein kinase family. Ephrin receptor subfamily. In terms of assembly, interacts with CBL and EPHB1. Interacts with FYN; this interaction takes place in a ligand-independent manner. Post-translationally, ligand-binding increases phosphorylation on tyrosine residues. Phosphorylation on tyrosine residues is mediated by transphosphorylation by the catalytically active EPHB1 in a ligand-independent manner. Tyrosine phosphorylation of the receptor may act as a switch on the functional transition from cell adhesion/attraction to de-adhesion/repulsion. Expressed in brain. Expressed in non invasive breast carcinoma cell lines (at protein level). Strong expression in brain and pancreas, and weak expression in other tissues, such as heart, placenta, lung, liver, skeletal muscle and kidney. Expressed in breast non invasive tumors but not in metastatic lesions. Isoform 3 is expressed in cell lines of glioblastomas, anaplastic astrocytomas, gliosarcomas and astrocytomas. Isoform 3 is not detected in normal tissues.

It localises to the membrane. The protein localises to the secreted. Functionally, kinase-defective receptor for members of the ephrin-B family. Binds to ephrin-B1 and ephrin-B2. Modulates cell adhesion and migration by exerting both positive and negative effects upon stimulation with ephrin-B2. Inhibits JNK activation, T-cell receptor-induced IL-2 secretion and CD25 expression upon stimulation with ephrin-B2. The protein is Ephrin type-B receptor 6 (EPHB6) of Homo sapiens (Human).